The sequence spans 201 residues: Small ribosomal subunit protein uS4c (201 aa).

The region spanning 89–150 is the S4 RNA-binding domain; it reads MRLDNIVFRL…RQKSQAIITK (62 aa).

It belongs to the universal ribosomal protein uS4 family. As to quaternary structure, part of the 30S ribosomal subunit. Contacts protein S5. The interaction surface between S4 and S5 is involved in control of translational fidelity.

The protein resides in the plastid. It is found in the chloroplast. Its function is as follows. One of the primary rRNA binding proteins, it binds directly to 16S rRNA where it nucleates assembly of the body of the 30S subunit. With S5 and S12 plays an important role in translational accuracy. In Physcomitrium patens (Spreading-leaved earth moss), this protein is Small ribosomal subunit protein uS4c (rps4).